The primary structure comprises 1238 residues: Topoisomerase 1-associated factor 1 (1238 aa).

Phosphoserine occurs at positions 626 and 654. The interval 1008 to 1051 (GIARSKKKDKRKRRKGEAKTNLPMFGDQDDERPQTVRERHGVFS) is disordered. Over residues 1010 to 1023 (ARSKKKDKRKRRKG) the composition is skewed to basic residues. Positions 1038–1050 (ERPQTVRERHGVF) are enriched in basic and acidic residues. 2 positions are modified to phosphoserine: serine 1056 and serine 1058. Positions 1159–1218 (NNNNNQLSDDDVNSESRNSLGSSQPSNSQNMFQSEVYSRKESTKRSLEASAADESDEDEE) are disordered. The span at 1173-1194 (ESRNSLGSSQPSNSQNMFQSEV) shows a compositional bias: polar residues. Residues 1195–1205 (YSRKESTKRSL) are compositionally biased toward basic and acidic residues. Residues 1209–1218 (AADESDEDEE) show a composition bias toward acidic residues. At serine 1213 the chain carries Phosphoserine.

Belongs to the timeless family. As to quaternary structure, component of the fork protection complex (FPC) consisting of TOF1 and CSM3. Interacts with WSS1 and ESC4.

The protein resides in the nucleus. Forms a fork protection complex (FPC) with CSM3 and which is required for chromosome segregation during meiosis and DNA damage repair. FPC coordinates leading and lagging strand synthesis and moves with the replication fork. FPC stabilizes replication forks in a configuration that is recognized by replication checkpoint sensors and protects stalled replication forks against the fork-releasing activity of RRM3 helicase. This is Topoisomerase 1-associated factor 1 (TOF1) from Saccharomyces cerevisiae (strain ATCC 204508 / S288c) (Baker's yeast).